A 451-amino-acid polypeptide reads, in one-letter code: Ribosomal protein uS12 methylthiotransferase RimO (451 aa).

In terms of domain architecture, MTTase N-terminal spans 17-127 (PTIGFVSLGC…VLAQVHEHLP (111 aa)). Positions 26, 62, 91, 160, 164, and 167 each coordinate [4Fe-4S] cluster. One can recognise a Radical SAM core domain in the interval 146-383 (LTPRHYAYLK…MQLQQRISTE (238 aa)). Residues 386–451 (KQKVGQTLPV…DEYDLWGTRV (66 aa)) form the TRAM domain.

Belongs to the methylthiotransferase family. RimO subfamily. [4Fe-4S] cluster is required as a cofactor.

It localises to the cytoplasm. It carries out the reaction L-aspartate(89)-[ribosomal protein uS12]-hydrogen + (sulfur carrier)-SH + AH2 + 2 S-adenosyl-L-methionine = 3-methylsulfanyl-L-aspartate(89)-[ribosomal protein uS12]-hydrogen + (sulfur carrier)-H + 5'-deoxyadenosine + L-methionine + A + S-adenosyl-L-homocysteine + 2 H(+). Its function is as follows. Catalyzes the methylthiolation of an aspartic acid residue of ribosomal protein uS12. This chain is Ribosomal protein uS12 methylthiotransferase RimO, found in Cellvibrio japonicus (strain Ueda107) (Pseudomonas fluorescens subsp. cellulosa).